Reading from the N-terminus, the 304-residue chain is ATP phosphoribosyltransferase (304 aa).

Belongs to the ATP phosphoribosyltransferase family. Long subfamily. The cofactor is Mg(2+).

It is found in the cytoplasm. The catalysed reaction is 1-(5-phospho-beta-D-ribosyl)-ATP + diphosphate = 5-phospho-alpha-D-ribose 1-diphosphate + ATP. It participates in amino-acid biosynthesis; L-histidine biosynthesis; L-histidine from 5-phospho-alpha-D-ribose 1-diphosphate: step 1/9. With respect to regulation, feedback inhibited by histidine. Functionally, catalyzes the condensation of ATP and 5-phosphoribose 1-diphosphate to form N'-(5'-phosphoribosyl)-ATP (PR-ATP). Has a crucial role in the pathway because the rate of histidine biosynthesis seems to be controlled primarily by regulation of HisG enzymatic activity. In Xanthomonas oryzae pv. oryzae (strain MAFF 311018), this protein is ATP phosphoribosyltransferase.